Consider the following 211-residue polypeptide: Sec-independent protein translocase protein TatB (211 aa).

A helical membrane pass occupies residues 1 to 21 (MFDIGVGELTLIAVVALVVLG). Residues 175 to 211 (AHLTSAPAPPVTVAPVDAGTSASPTPSEPTKIQEKQP) are disordered. A compositionally biased stretch (polar residues) spans 194-204 (TSASPTPSEPT).

It belongs to the TatB family. The Tat system comprises two distinct complexes: a TatABC complex, containing multiple copies of TatA, TatB and TatC subunits, and a separate TatA complex, containing only TatA subunits. Substrates initially bind to the TatABC complex, which probably triggers association of the separate TatA complex to form the active translocon.

It localises to the cell inner membrane. Part of the twin-arginine translocation (Tat) system that transports large folded proteins containing a characteristic twin-arginine motif in their signal peptide across membranes. Together with TatC, TatB is part of a receptor directly interacting with Tat signal peptides. TatB may form an oligomeric binding site that transiently accommodates folded Tat precursor proteins before their translocation. The sequence is that of Sec-independent protein translocase protein TatB from Xanthomonas oryzae pv. oryzae (strain MAFF 311018).